We begin with the raw amino-acid sequence, 349 residues long: Hypoxia-inducible factor 1-alpha inhibitor (349 aa).

Residues 1–14 are compositionally biased toward low complexity; the sequence is MAATAAEVAASGSG. The segment at 1–51 is disordered; that stretch reads MAATAAEVAASGSGEAREEAEAPGPAWDESQLRSYSFPTRPIPRLSQSDPR. The residue at position 2 (A2) is an N-acetylalanine. Positions 2–125 are interaction with VHL; the sequence is AATAAEVAAS…PRSNREEIKF (124 aa). Residues 142–307 enclose the JmjC domain; the sequence is ERLYLQQTLN…KGAPTPKRIE (166 aa). Y145 contributes to the 2-oxoglutarate binding site. Substrate-binding positions include D152 and 181–183; that span reads QLT. T196 provides a ligand contact to 2-oxoglutarate. H199 and D201 together coordinate Fe cation. Residue 201–203 participates in substrate binding; sequence DEQ. 2-oxoglutarate contacts are provided by N205 and K214. 238 to 239 provides a ligand contact to substrate; that stretch reads RQ. H279 contributes to the Fe cation binding site. N294 serves as a coordination point for 2-oxoglutarate. Substrate-binding residues include A300 and N321.

Homodimer; homodimerization is essential for catalytic activity. Interacts with VHL and HIF1A. Part of a complex with VHL, HIF1A and HDAC1 or HDAC2 or HDAC3. Interacts with NFKB1 and NFKBIA. Interacts with NOTCH1, NOTCH2 and NOTCH3 but not with NOTCH4. Interacts with ABPA3. Interacts with TNKS2. Interacts with PPP1R12A. Interacts with UBE3A. Interacts with ASB4. Interacts with ANKS3. Interacts with NECAB3; the interaction is indirect and seems to be mediated by APBA3. Fe(2+) serves as cofactor.

The protein localises to the nucleus. It is found in the cytoplasm. The protein resides in the perinuclear region. It carries out the reaction L-asparaginyl-[hypoxia-inducible factor alpha subunit] + 2-oxoglutarate + O2 = (3S)-3-hydroxy-L-asparaginyl-[hypoxia-inducible factor alpha subunit] + succinate + CO2. The catalysed reaction is L-histidyl-[ankyrin-repeat domain protein] + 2-oxoglutarate + O2 = (3S)-3-hydroxy-L-histidyl-[ankyrin-repeat domain protein] + succinate + CO2. It catalyses the reaction L-asparaginyl-[ankyrin-repeat domain protein] + 2-oxoglutarate + O2 = (3S)-3-hydroxy-L-asparaginyl-[ankyrin-repeat domain protein] + succinate + CO2. The enzyme catalyses L-aspartyl-[ankyrin-repeat domain protein] + 2-oxoglutarate + O2 = (3S)-3-hydroxy-L-aspartyl-[ankyrin-repeat domain protein] + succinate + CO2. In terms of biological role, hydroxylates HIF-1 alpha at 'Asn-799' in the C-terminal transactivation domain (CAD). Functions as an oxygen sensor and, under normoxic conditions, the hydroxylation prevents interaction of HIF-1 with transcriptional coactivators including Cbp/p300-interacting transactivator. Involved in transcriptional repression through interaction with HIF1A, VHL and histone deacetylases. Hydroxylates specific Asn residues within ankyrin repeat domains (ARD) of NFKB1, NFKBIA, NOTCH1, ASB4, PPP1R12A and several other ARD-containing proteins. Also hydroxylates Asp and His residues within ARDs of ANK1 and TNKS2, respectively. Negatively regulates NOTCH1 activity, accelerating myogenic differentiation. Positively regulates ASB4 activity, promoting vascular differentiation. The protein is Hypoxia-inducible factor 1-alpha inhibitor (Hif1an) of Mus musculus (Mouse).